A 262-amino-acid chain; its full sequence is Hydroxyacylglutathione hydrolase (262 aa).

Residues H53, H55, D57, H58, H111, D128, and H166 each coordinate Zn(2+).

It belongs to the metallo-beta-lactamase superfamily. Glyoxalase II family. Monomer. It depends on Zn(2+) as a cofactor.

It catalyses the reaction an S-(2-hydroxyacyl)glutathione + H2O = a 2-hydroxy carboxylate + glutathione + H(+). The protein operates within secondary metabolite metabolism; methylglyoxal degradation; (R)-lactate from methylglyoxal: step 2/2. In terms of biological role, thiolesterase that catalyzes the hydrolysis of S-D-lactoyl-glutathione to form glutathione and D-lactic acid. This Nitrosomonas europaea (strain ATCC 19718 / CIP 103999 / KCTC 2705 / NBRC 14298) protein is Hydroxyacylglutathione hydrolase.